We begin with the raw amino-acid sequence, 360 residues long: Photosystem II protein D1 (360 aa).

The next 3 helical transmembrane spans lie at 29–46 (YVGWFGVIMIPTLLTATT), 118–133 (HFLLGVFCYLGRQWEL), and 142–156 (WICVAYSAPVSAATA). His-118 is a chlorophyll a binding site. Tyr-126 serves as a coordination point for pheophytin a. Asp-170 and Glu-189 together coordinate [CaMn4O5] cluster. The chain crosses the membrane as a helical span at residues 197 to 218 (FHMLGVAGVFGGSLFSAMHGSL). Residue His-198 participates in chlorophyll a binding. Residues His-215 and 264–265 (SF) contribute to the a quinone site. His-215 contributes to the Fe cation binding site. Residue His-272 coordinates Fe cation. Residues 274–288 (FLGAWPVIGIWFTAM) traverse the membrane as a helical segment. Positions 332, 333, 342, and 344 each coordinate [CaMn4O5] cluster. The propeptide occupies 345–360 (SGEQAPVALTAPAING).

It belongs to the reaction center PufL/M/PsbA/D family. In terms of assembly, PSII is composed of 1 copy each of membrane proteins PsbA, PsbB, PsbC, PsbD, PsbE, PsbF, PsbH, PsbI, PsbJ, PsbK, PsbL, PsbM, PsbT, PsbX, PsbY, PsbZ, Psb30/Ycf12, peripheral proteins PsbO, CyanoQ (PsbQ), PsbU, PsbV and a large number of cofactors. It forms dimeric complexes. The D1/D2 heterodimer binds P680, chlorophylls that are the primary electron donor of PSII, and subsequent electron acceptors. It shares a non-heme iron and each subunit binds pheophytin, quinone, additional chlorophylls, carotenoids and lipids. D1 provides most of the ligands for the Mn4-Ca-O5 cluster of the oxygen-evolving complex (OEC). There is also a Cl(-1) ion associated with D1 and D2, which is required for oxygen evolution. The PSII complex binds additional chlorophylls, carotenoids and specific lipids. serves as cofactor. Tyr-161 forms a radical intermediate that is referred to as redox-active TyrZ, YZ or Y-Z. In terms of processing, C-terminally processed by CtpA; processing is essential to allow assembly of the oxygen-evolving complex and thus photosynthetic growth.

It localises to the cellular thylakoid membrane. The enzyme catalyses 2 a plastoquinone + 4 hnu + 2 H2O = 2 a plastoquinol + O2. Photosystem II (PSII) is a light-driven water:plastoquinone oxidoreductase that uses light energy to abstract electrons from H(2)O, generating O(2) and a proton gradient subsequently used for ATP formation. It consists of a core antenna complex that captures photons, and an electron transfer chain that converts photonic excitation into a charge separation. The D1/D2 (PsbA/PsbD) reaction center heterodimer binds P680, the primary electron donor of PSII as well as several subsequent electron acceptors. This chain is Photosystem II protein D1, found in Microcystis aeruginosa.